The chain runs to 1459 residues: Mediator of RNA polymerase II transcription subunit 14 (1459 aa).

The interval methionine 1–proline 37 is disordered. Residues proline 14 to serine 27 show a composition bias toward gly residues. Residues leucine 75 to leucine 79 carry the LXXLL motif 1 motif. The segment at lysine 194–tyrosine 572 is interaction with STAT2. The segment at leucine 506–tryptophan 830 is interaction with SREBF1. Serine 623 and serine 992 each carry phosphoserine. The segment at alanine 979–glutamine 1171 is disordered. Polar residues-rich tracts occupy residues proline 1029–serine 1059 and aspartate 1097–serine 1106. Residues serine 1117, serine 1124, serine 1133, serine 1141, and serine 1149 each carry the phosphoserine modification. Over residues alanine 1152 to threonine 1161 the composition is skewed to polar residues. Positions leucine 1187–leucine 1191 match the LXXLL motif 2 motif.

Belongs to the Mediator complex subunit 14 family. In terms of assembly, component of the Mediator complex, which is composed of MED1, MED4, MED6, MED7, MED8, MED9, MED10, MED11, MED12, MED13, MED13L, MED14, MED15, MED16, MED17, MED18, MED19, MED20, MED21, MED22, MED23, MED24, MED25, MED26, MED27, MED29, MED30, MED31, CCNC, CDK8 and CDC2L6/CDK11. The MED12, MED13, CCNC and CDK8 subunits form a distinct module termed the CDK8 module. Mediator containing the CDK8 module is less active than Mediator lacking this module in supporting transcriptional activation. Individual preparations of the Mediator complex lacking one or more distinct subunits have been variously termed ARC, CRSP, DRIP, PC2, SMCC and TRAP. Interacts with AR, ESR1, SREBF1 and STAT2. Interacts with GATA1.

The protein resides in the nucleus. Functionally, component of the Mediator complex, a coactivator involved in the regulated transcription of nearly all RNA polymerase II-dependent genes. Mediator functions as a bridge to convey information from gene-specific regulatory proteins to the basal RNA polymerase II transcription machinery. Mediator is recruited to promoters by direct interactions with regulatory proteins and serves as a scaffold for the assembly of a functional preinitiation complex with RNA polymerase II and the general transcription factors. This Mus musculus (Mouse) protein is Mediator of RNA polymerase II transcription subunit 14 (Med14).